A 47-amino-acid chain; its full sequence is Defensin Tk-AMP-D1.1 (47 aa).

4 disulfides stabilise this stretch: Cys3-Cys47, Cys14-Cys34, Cys20-Cys41, and Cys24-Cys43.

Plant defense peptide. The chain is Defensin Tk-AMP-D1.1 from Triticum kiharae (Wheat).